A 315-amino-acid chain; its full sequence is S-methyl-5'-thioadenosine phosphorylase (315 aa).

Phosphate is bound by residues Ser-22, 65–66 (RH), and 98–99 (SA). Met-205 lines the substrate pocket. Ser-206 contacts phosphate. 229–231 (DYD) contributes to the substrate binding site.

It belongs to the PNP/MTAP phosphorylase family. MTAP subfamily. As to quaternary structure, homotrimer.

It localises to the cytoplasm. It is found in the nucleus. It carries out the reaction S-methyl-5'-thioadenosine + phosphate = 5-(methylsulfanyl)-alpha-D-ribose 1-phosphate + adenine. Its pathway is amino-acid biosynthesis; L-methionine biosynthesis via salvage pathway; S-methyl-5-thio-alpha-D-ribose 1-phosphate from S-methyl-5'-thioadenosine (phosphorylase route): step 1/1. Catalyzes the reversible phosphorylation of S-methyl-5'-thioadenosine (MTA) to adenine and 5-methylthioribose-1-phosphate. Involved in the breakdown of MTA, a major by-product of polyamine biosynthesis. Responsible for the first step in the methionine salvage pathway after MTA has been generated from S-adenosylmethionine. Has broad substrate specificity with 6-aminopurine nucleosides as preferred substrates. In Mycosarcoma maydis (Corn smut fungus), this protein is S-methyl-5'-thioadenosine phosphorylase.